Consider the following 394-residue polypeptide: Endothelial cell-selective adhesion molecule (394 aa).

The first 29 residues, 1 to 29 (MILPARTPETSLLRVLFLGLSTLAAFSLA), serve as a signal peptide directing secretion. The Extracellular segment spans residues 30–251 (QMELHVPPGL…LDVMTGSKAA (222 aa)). The Ig-like V-type domain maps to 37-146 (PGLNKLEAVE…DGKNIGHSIK (110 aa)). N-linked (GlcNAc...) asparagine glycans are attached at residues N111, N172, N216, and N239. The Ig-like C2-type domain maps to 156–243 (PAPPSCSFQG…GFAQCNVTLD (88 aa)). The cysteines at positions 177 and 227 are disulfide-linked. The chain crosses the membrane as a helical span at residues 252–272 (VVAGAVVGTFVGLVLIAGLVL). At 273-394 (LYQRRSKTLE…PAQSQAGSLV (122 aa)) the chain is on the cytoplasmic side. The disordered stretch occupies residues 300–372 (WTKGSDTISK…SLTPGGVSSS (73 aa)). 2 stretches are compositionally biased toward polar residues: residues 303-318 (GSDTISKNGTLSSVTS) and 335-347 (FTPTPSVSSQALS). S304 bears the Phosphoserine mark. Phosphothreonine occurs at positions 336 and 338. Phosphoserine occurs at positions 340, 343, and 348.

In terms of assembly, interacts with MAGI1.

It is found in the cell junction. The protein resides in the adherens junction. Its subcellular location is the tight junction. It localises to the cell membrane. Functionally, can mediate aggregation most likely through a homophilic molecular interaction. In Rattus norvegicus (Rat), this protein is Endothelial cell-selective adhesion molecule (Esam).